Reading from the N-terminus, the 83-residue chain is Protein FAM240A (83 aa).

This sequence belongs to the FAM240 family.

The sequence is that of Protein FAM240A from Homo sapiens (Human).